The following is a 315-amino-acid chain: Cobalamin biosynthesis protein CobD (315 aa).

A run of 7 helical transmembrane segments spans residues 1–21 (MLDIIIAVIIDWIIGDPYWFP), 50–70 (VFGGFIVIIVSSISFLIPFII), 79–99 (VIYHVINIFFLWTVLAAKSLH), 151–171 (DGIIAPLLFAMLGGAPLAMMY), 209–229 (VTGIIMCLVSPIIGGNIFYSI), 250–270 (AAAAASGIMLGGTNIYFGEVV), and 291–311 (IILMYSSEILFIIIYVIIICF).

It belongs to the CobD/CbiB family.

The protein localises to the cell membrane. It functions in the pathway cofactor biosynthesis; adenosylcobalamin biosynthesis. Functionally, converts cobyric acid to cobinamide by the addition of aminopropanol on the F carboxylic group. The protein is Cobalamin biosynthesis protein CobD of Clostridium acetobutylicum (strain ATCC 824 / DSM 792 / JCM 1419 / IAM 19013 / LMG 5710 / NBRC 13948 / NRRL B-527 / VKM B-1787 / 2291 / W).